The following is a 491-amino-acid chain: UDP-N-acetylmuramate--L-alanine ligase (491 aa).

126 to 132 lines the ATP pocket; sequence GTHGKTT.

It belongs to the MurCDEF family.

It is found in the cytoplasm. The enzyme catalyses UDP-N-acetyl-alpha-D-muramate + L-alanine + ATP = UDP-N-acetyl-alpha-D-muramoyl-L-alanine + ADP + phosphate + H(+). The protein operates within cell wall biogenesis; peptidoglycan biosynthesis. Functionally, cell wall formation. This is UDP-N-acetylmuramate--L-alanine ligase from Salmonella paratyphi A (strain ATCC 9150 / SARB42).